We begin with the raw amino-acid sequence, 227 residues long: Thymidylate kinase (227 aa).

7–14 (GIEGSGKT) contacts ATP.

The protein belongs to the thymidylate kinase family.

It catalyses the reaction dTMP + ATP = dTDP + ADP. In terms of biological role, phosphorylation of dTMP to form dTDP in both de novo and salvage pathways of dTTP synthesis. This is Thymidylate kinase from Desulforapulum autotrophicum (strain ATCC 43914 / DSM 3382 / VKM B-1955 / HRM2) (Desulfobacterium autotrophicum).